The chain runs to 272 residues: D-aminoacyl-tRNA deacylase (272 aa).

Belongs to the DtdA deacylase family. In terms of assembly, monomer. It depends on Zn(2+) as a cofactor.

It carries out the reaction a D-aminoacyl-tRNA + H2O = a tRNA + a D-alpha-amino acid + H(+). The catalysed reaction is glycyl-tRNA(Ala) + H2O = tRNA(Ala) + glycine + H(+). In terms of biological role, D-aminoacyl-tRNA deacylase with broad substrate specificity. By recycling D-aminoacyl-tRNA to D-amino acids and free tRNA molecules, this enzyme counteracts the toxicity associated with the formation of D-aminoacyl-tRNA entities in vivo. This chain is D-aminoacyl-tRNA deacylase, found in Hyperthermus butylicus (strain DSM 5456 / JCM 9403 / PLM1-5).